Consider the following 277-residue polypeptide: Sulfur carrier protein FdhD (277 aa).

Residue Cys123 is the Cysteine persulfide intermediate of the active site.

Belongs to the FdhD family.

The protein localises to the cytoplasm. In terms of biological role, required for formate dehydrogenase (FDH) activity. Acts as a sulfur carrier protein that transfers sulfur from IscS to the molybdenum cofactor prior to its insertion into FDH. This is Sulfur carrier protein FdhD from Pectobacterium atrosepticum (strain SCRI 1043 / ATCC BAA-672) (Erwinia carotovora subsp. atroseptica).